We begin with the raw amino-acid sequence, 462 residues long: Hyaluronidase-1 (462 aa).

Positions 1–52 (MLGLTQHAQKVWRMKPFSPEVSPGSSPATAGHLLRISTLFLTLLELAQVCRG) are cleaved as a signal peptide. 2 disulfides stabilise this stretch: cysteine 71–cysteine 361 and cysteine 235–cysteine 249. 2 N-linked (GlcNAc...) asparagine glycosylation sites follow: asparagine 98 and asparagine 127. Glutamate 159 acts as the Proton donor in catalysis. Asparagine 244, asparagine 265, and asparagine 378 each carry an N-linked (GlcNAc...) asparagine glycan. 3 cysteine pairs are disulfide-bonded: cysteine 386-cysteine 397, cysteine 391-cysteine 446, and cysteine 448-cysteine 457. The EGF-like domain occupies 446 to 457 (CRCYRGWRGKWC).

Belongs to the glycosyl hydrolase 56 family. In terms of tissue distribution, highly expressed in liver, kidney, lung and skin.

The protein localises to the secreted. The protein resides in the lysosome. It catalyses the reaction Random hydrolysis of (1-&gt;4)-linkages between N-acetyl-beta-D-glucosamine and D-glucuronate residues in hyaluronate.. Its function is as follows. May have a role in promoting tumor progression. May block the TGFB1-enhanced cell growth. This chain is Hyaluronidase-1 (Hyal1), found in Mus musculus (Mouse).